The primary structure comprises 289 residues: ATP synthase gamma chain (289 aa).

It belongs to the ATPase gamma chain family. F-type ATPases have 2 components, CF(1) - the catalytic core - and CF(0) - the membrane proton channel. CF(1) has five subunits: alpha(3), beta(3), gamma(1), delta(1), epsilon(1). CF(0) has three main subunits: a, b and c.

It is found in the cell inner membrane. In terms of biological role, produces ATP from ADP in the presence of a proton gradient across the membrane. The gamma chain is believed to be important in regulating ATPase activity and the flow of protons through the CF(0) complex. In Cereibacter sphaeroides (strain ATCC 17029 / ATH 2.4.9) (Rhodobacter sphaeroides), this protein is ATP synthase gamma chain.